The chain runs to 37 residues: Large ribosomal subunit protein bL36 (37 aa).

This sequence belongs to the bacterial ribosomal protein bL36 family.

The chain is Large ribosomal subunit protein bL36 from Thermomicrobium roseum (strain ATCC 27502 / DSM 5159 / P-2).